A 913-amino-acid polypeptide reads, in one-letter code: Vacuolar membrane protease (913 aa).

The Cytoplasmic portion of the chain corresponds to 1 to 15 (MMANYFRSTFKFRKT). A helical transmembrane segment spans residues 16–36 (TVSTLFVLTVLVISILTWFDA). The Vacuolar segment spans residues 37–364 (NKYKSNLPDD…FFVVSARQLY (328 aa)). N117 carries N-linked (GlcNAc...) asparagine glycosylation. Residues H152 and D164 each contribute to the Zn(2+) site. E196 functions as the Proton acceptor in the catalytic mechanism. Zn(2+) contacts are provided by E197, E222, and H296. The chain crosses the membrane as a helical span at residues 365–385 (VWNIVLLCVLPITLILLRIVC). Over 386 to 394 (NKLGTWRMP) the chain is Cytoplasmic. A helical transmembrane segment spans residues 395 to 415 (TSALFTRIPFALFVSSFTIYF). Topologically, residues 416-431 (TKELLLQLNPTIWSRN) are vacuolar. Residues 432 to 452 (FILPFLFCISEFLLINTLVLA) form a helical membrane-spanning segment. Topologically, residues 453-465 (LFEYLWPIQDFKT) are cytoplasmic. The chain crosses the membrane as a helical span at residues 466-486 (LSLLELSAIAWLFLLKCTWDL). Topologically, residues 487-494 (SSSGFKAT) are vacuolar. Residues 495-515 (GVYPVTVFYLFISLASMFGLC) form a helical membrane-spanning segment. Topologically, residues 516 to 600 (SMCFGKRPNA…TLNYDWSAQY (85 aa)) are cytoplasmic. Positions 540 to 552 (NDTHSIECPRQPE) are enriched in basic and acidic residues. Residues 540–578 (NDTHSIECPRQPEDSETTETSPLINTPSSSVQSSPIASS) form a disordered region. Positions 557 to 566 (TETSPLINTP) are enriched in polar residues. The segment covering 567 to 578 (SSSVQSSPIASS) has biased composition (low complexity). Residues 601-621 (LLAVPINAFLIWESLFNLFDA) traverse the membrane as a helical segment. Topologically, residues 622–634 (LSMTVQESNKATE) are vacuolar. A helical membrane pass occupies residues 635–655 (AVFKFAIYGAIFLCSPLLPFT). Residues 656–660 (TKLNR) lie on the Cytoplasmic side of the membrane. A helical transmembrane segment spans residues 661 to 681 (FVVIILGVVTILAASFSLFAA). Topologically, residues 682-913 (PYTELAPLKL…MVTIHKYLEL (232 aa)) are vacuolar. N-linked (GlcNAc...) asparagine glycosylation is found at N729, N794, and N810.

The protein belongs to the peptidase M28 family. Requires Zn(2+) as cofactor.

The protein localises to the vacuole membrane. May be involved in vacuolar sorting and osmoregulation. The protein is Vacuolar membrane protease of Kluyveromyces lactis (strain ATCC 8585 / CBS 2359 / DSM 70799 / NBRC 1267 / NRRL Y-1140 / WM37) (Yeast).